Consider the following 557-residue polypeptide: Dihydroxy-acid dehydratase (557 aa).

Residue C50 participates in [2Fe-2S] cluster binding. D82 provides a ligand contact to Mg(2+). A [2Fe-2S] cluster-binding site is contributed by C123. Residues D124 and K125 each coordinate Mg(2+). An N6-carboxylysine modification is found at K125. C195 contributes to the [2Fe-2S] cluster binding site. E447 provides a ligand contact to Mg(2+). Catalysis depends on S473, which acts as the Proton acceptor.

This sequence belongs to the IlvD/Edd family. As to quaternary structure, homodimer. It depends on [2Fe-2S] cluster as a cofactor. Requires Mg(2+) as cofactor.

The enzyme catalyses (2R)-2,3-dihydroxy-3-methylbutanoate = 3-methyl-2-oxobutanoate + H2O. It carries out the reaction (2R,3R)-2,3-dihydroxy-3-methylpentanoate = (S)-3-methyl-2-oxopentanoate + H2O. It participates in amino-acid biosynthesis; L-isoleucine biosynthesis; L-isoleucine from 2-oxobutanoate: step 3/4. Its pathway is amino-acid biosynthesis; L-valine biosynthesis; L-valine from pyruvate: step 3/4. Functions in the biosynthesis of branched-chain amino acids. Catalyzes the dehydration of (2R,3R)-2,3-dihydroxy-3-methylpentanoate (2,3-dihydroxy-3-methylvalerate) into 2-oxo-3-methylpentanoate (2-oxo-3-methylvalerate) and of (2R)-2,3-dihydroxy-3-methylbutanoate (2,3-dihydroxyisovalerate) into 2-oxo-3-methylbutanoate (2-oxoisovalerate), the penultimate precursor to L-isoleucine and L-valine, respectively. The polypeptide is Dihydroxy-acid dehydratase (Burkholderia pseudomallei (strain 1710b)).